Reading from the N-terminus, the 185-residue chain is MAKDKDQNSIFAITKNLTITCFISGIIIAAVYYITSPVAAQKQVQIQNDTMRVLVNDADKFNKVNGKKDWYAAQKGNKTIAYVVPAESKGYGGAIELLVAVTPDGKVIDFSIVSHNETPGLGANASKDSFRGQFKDKKADALTVVKDKSNTKNIQAMTGATITSKAVTKGVKEAVEQVTTFTGGK.

Residues 14–34 form a helical membrane-spanning segment; sequence TKNLTITCFISGIIIAAVYYI. Position 161 is an FMN phosphoryl threonine (Thr161).

The protein belongs to the RnfG family. The complex is composed of six subunits: RnfA, RnfB, RnfC, RnfD, RnfE and RnfG. The cofactor is FMN.

Its subcellular location is the cell membrane. Part of a membrane-bound complex that couples electron transfer with translocation of ions across the membrane. Couples electron transfer from reduced ferredoxin to NAD(+) with translocation of H(+) out of the cell. Essential for energy conservation during autotrophic growth. Contributes to ATP synthesis during heterotrophic growth. This chain is Proton-translocating ferredoxin:NAD(+) oxidoreductase complex subunit G, found in Clostridium ljungdahlii (strain ATCC 55383 / DSM 13528 / PETC).